Here is a 65-residue protein sequence, read N- to C-terminus: UPF0370 protein Ent638_2968 (65 aa).

The chain crosses the membrane as a helical span at residues 4–24 (LSKYWWILVLVFLVGVLLNVI). Positions 39-65 (KPELPPHRDFNDKWDDDDNWPKKDQKK) are disordered. Over residues 42–65 (LPPHRDFNDKWDDDDNWPKKDQKK) the composition is skewed to basic and acidic residues.

It belongs to the UPF0370 family.

Its subcellular location is the cell membrane. In Enterobacter sp. (strain 638), this protein is UPF0370 protein Ent638_2968.